The following is a 191-amino-acid chain: Protein Ves (191 aa).

It belongs to the Ves family.

This chain is Protein Ves, found in Shigella flexneri serotype 5b (strain 8401).